A 1078-amino-acid chain; its full sequence is Nonribosomal peptide synthetase aneB (1078 aa).

The tract at residues 20–417 is adenylation; sequence FQQNVLDRPD…HGRKDTQVKI (398 aa). Residues 559-635 enclose the Carrier domain; that stretch reads MPTTPLERQM…TLCQHVSVRP (77 aa). Residue S596 is modified to O-(pantetheine 4'-phosphoryl)serine. Residues 699–1013 form a condensation region; that stretch reads NYTLRLDVKL…HEMGYYGPVT (315 aa).

This sequence belongs to the NRP synthetase family.

The catalysed reaction is holo-[peptidyl-carrier protein] + L-proline + ATP = L-prolyl-[peptidyl-carrier protein] + AMP + diphosphate. It functions in the pathway secondary metabolite biosynthesis. Functionally, nonribosomal peptide synthetase; part of the gene cluster that mediates the biosynthesis of aculenes, a unique type of norsesquiterpenes that contain a nordaucane skeleton linked to an L-proline moiety and are of mixed biosynthetic origin. The pathway begins with the synthesis of dauca-4,7-diene by the terpene cyclase aneC using farnesyl pyrophosphate (FPP) as substrate. The cytochrome P450 monooxygenase aneF then performs the initial oxidation at C-12 of dauca-4,7-diene to yield asperaculane D. Asperaculane D is substrate of the cytochrome P450 monooxygenase aneD for C-10 hydroxylation to yield asperaculane E. The cytochrome P450 monooxygenase aneG then converts asperaculane E into aculene D via C-2 oxidation. The monomodular nonribosomal peptide synthase aneB adenylates L-proline and the thiohydrolase aneE transfers this activated L-proline derivative to aculenes D and C to produce respectively aculenes B and A. The dioxygenase aneA converts aculene D into aculene C, and aculene B into aculene A by introducing the 5,6-alkene moiety. Asperculanes A, B, C and F, as well as 14-prolyl asperculane C, might be shunt products of the pathway. In Aspergillus aculeatus (strain ATCC 16872 / CBS 172.66 / WB 5094), this protein is Nonribosomal peptide synthetase aneB.